Here is a 156-residue protein sequence, read N- to C-terminus: 3-dehydroquinate dehydratase (156 aa).

Tyr24 (proton acceptor) is an active-site residue. 3 residues coordinate substrate: Asn76, His82, and Asp89. The active-site Proton donor is the His102. Substrate contacts are provided by residues 103 to 104 (IS) and Arg113.

It belongs to the type-II 3-dehydroquinase family. As to quaternary structure, homododecamer.

The enzyme catalyses 3-dehydroquinate = 3-dehydroshikimate + H2O. It participates in metabolic intermediate biosynthesis; chorismate biosynthesis; chorismate from D-erythrose 4-phosphate and phosphoenolpyruvate: step 3/7. Its function is as follows. Catalyzes a trans-dehydration via an enolate intermediate. The chain is 3-dehydroquinate dehydratase from Nitrobacter winogradskyi (strain ATCC 25391 / DSM 10237 / CIP 104748 / NCIMB 11846 / Nb-255).